We begin with the raw amino-acid sequence, 186 residues long: Lumazine protein (186 aa).

Lumazine-binding repeat units lie at residues Met1–Gly96 and Gly97–Trp186.

Requires 6,7-dimethyl-8-(1-D-ribityl)lumazine as cofactor.

Its function is as follows. Antenna protein that modulates the color of the bioluminescence emission of the luciferase. In the presence of LumP, luciferase emission is shifted to higher energy values (shorter wavelength). This is Lumazine protein (lumP) from Photobacterium leiognathi.